Reading from the N-terminus, the 309-residue chain is Homoserine kinase (309 aa).

Pro95–Ala105 is an ATP binding site.

Belongs to the GHMP kinase family. Homoserine kinase subfamily.

Its subcellular location is the cytoplasm. It carries out the reaction L-homoserine + ATP = O-phospho-L-homoserine + ADP + H(+). The protein operates within amino-acid biosynthesis; L-threonine biosynthesis; L-threonine from L-aspartate: step 4/5. Catalyzes the ATP-dependent phosphorylation of L-homoserine to L-homoserine phosphate. The chain is Homoserine kinase from Corynebacterium efficiens (strain DSM 44549 / YS-314 / AJ 12310 / JCM 11189 / NBRC 100395).